A 276-amino-acid chain; its full sequence is Urease accessory protein UreD (276 aa).

The protein belongs to the UreD family. UreD, UreF and UreG form a complex that acts as a GTP-hydrolysis-dependent molecular chaperone, activating the urease apoprotein by helping to assemble the nickel containing metallocenter of UreC. The UreE protein probably delivers the nickel.

It is found in the cytoplasm. In terms of biological role, required for maturation of urease via the functional incorporation of the urease nickel metallocenter. The sequence is that of Urease accessory protein UreD from Albidiferax ferrireducens (strain ATCC BAA-621 / DSM 15236 / T118) (Rhodoferax ferrireducens).